Reading from the N-terminus, the 557-residue chain is Vacuolar protein sorting-associated protein 30 (557 aa).

2 disordered regions span residues 93–149 and 218–238; these read DDDN…ENQQ and NKEISESNKEKQYSHNLSEKE. The segment covering 135 to 147 has biased composition (acidic residues); that stretch reads DEEEQEATDEDEN. Thr142 carries the post-translational modification Phosphothreonine. A coiled-coil region spans residues 189–322; sequence LINRLKSEYD…QLDKLRKINI (134 aa). The tract at residues 320 to 539 is BARA; that stretch reads INIFNATFKI…LAFSSNLLSK (220 aa). The segment at 515 to 540 is required for membrane-association, autophagic function during starvation and normal autophagosome morphology; it reads WTTAMKFLLTNVKWLLAFSSNLLSKS.

It belongs to the beclin family. Component of the autophagy-specific VPS34 PI3-kinase complex I composed of VPS15, VPS30, VPS34, ATG14 and ATG38; and of the VPS34 PI3-kinase complex II composed of VPS15, VPS30, VPS34 and VPS38.

It localises to the endosome membrane. The protein localises to the vacuole membrane. Its subcellular location is the preautophagosomal structure membrane. In terms of biological role, required for cytoplasm to vacuole transport (Cvt), autophagy, nucleophagy, and mitophagy, as a part of the autophagy-specific VPS34 PI3-kinase complex I. This complex is essential to recruit the ATG8-phosphatidylinositol conjugate and the ATG12-ATG5 conjugate to the pre-autophagosomal structure. Also involved in endosome-to-Golgi retrograde transport as part of the VPS34 PI3-kinase complex II. This second complex is required for the endosome-to-Golgi retrieval of PEP1 and KEX2, and the recruitment of VPS5 and VPS7, two components of the retromer complex, to endosomal membranes (probably through the synthesis of a specific pool of phosphatidylinositol 3-phosphate recruiting the retromer to the endosomes). Also plays a role in regulation of filamentous growth. The protein is Vacuolar protein sorting-associated protein 30 of Saccharomyces cerevisiae (strain ATCC 204508 / S288c) (Baker's yeast).